Here is a 90-residue protein sequence, read N- to C-terminus: DNA-directed RNA polymerase subunit omega (90 aa).

Residues 70 to 90 are disordered; the sequence is QEQQEQEAAELAAVSSIMHNR.

Belongs to the RNA polymerase subunit omega family. As to quaternary structure, the RNAP catalytic core consists of 2 alpha, 1 beta, 1 beta' and 1 omega subunit. When a sigma factor is associated with the core the holoenzyme is formed, which can initiate transcription.

The catalysed reaction is RNA(n) + a ribonucleoside 5'-triphosphate = RNA(n+1) + diphosphate. Its function is as follows. Promotes RNA polymerase assembly. Latches the N- and C-terminal regions of the beta' subunit thereby facilitating its interaction with the beta and alpha subunits. This chain is DNA-directed RNA polymerase subunit omega, found in Vibrio cholerae serotype O1 (strain ATCC 39541 / Classical Ogawa 395 / O395).